The primary structure comprises 204 residues: UPF0637 protein SAS1041 (204 aa).

This sequence belongs to the UPF0637 family.

This Staphylococcus aureus (strain MSSA476) protein is UPF0637 protein SAS1041.